Consider the following 257-residue polypeptide: Imidazole glycerol phosphate synthase subunit HisF (257 aa).

Residues D11 and D130 contribute to the active site.

The protein belongs to the HisA/HisF family. Heterodimer of HisH and HisF.

The protein localises to the cytoplasm. It catalyses the reaction 5-[(5-phospho-1-deoxy-D-ribulos-1-ylimino)methylamino]-1-(5-phospho-beta-D-ribosyl)imidazole-4-carboxamide + L-glutamine = D-erythro-1-(imidazol-4-yl)glycerol 3-phosphate + 5-amino-1-(5-phospho-beta-D-ribosyl)imidazole-4-carboxamide + L-glutamate + H(+). The protein operates within amino-acid biosynthesis; L-histidine biosynthesis; L-histidine from 5-phospho-alpha-D-ribose 1-diphosphate: step 5/9. Its function is as follows. IGPS catalyzes the conversion of PRFAR and glutamine to IGP, AICAR and glutamate. The HisF subunit catalyzes the cyclization activity that produces IGP and AICAR from PRFAR using the ammonia provided by the HisH subunit. This Xylella fastidiosa (strain M23) protein is Imidazole glycerol phosphate synthase subunit HisF.